The following is a 142-amino-acid chain: Protein archease (142 aa).

3 residues coordinate Ca(2+): aspartate 12, aspartate 141, and leucine 142.

Belongs to the archease family.

Functionally, activates the tRNA-splicing ligase complex by facilitating the enzymatic turnover of catalytic subunit RtcB. Acts by promoting the guanylylation of RtcB, a key intermediate step in tRNA ligation. Can also alter the NTP specificity of RtcB such that ATP, dGTP or ITP is used efficiently. The chain is Protein archease from Thermococcus gammatolerans (strain DSM 15229 / JCM 11827 / EJ3).